Here is a 167-residue protein sequence, read N- to C-terminus: MAYFGCGPCGGSAGYNNCYNNGYGNGYGSNHCRDGFGACQNNVSGRNREVYYEKDNCFNANNNNFYGGRENDSCGGWNAGCNNGNCGGWNSGGCGLPFYGGGCGIGGGCGIGGGCGPIGDCGPIGGGCGPIGGGCGPVGGWRKGYKGGYGGAPSSKLCRGLGYKKRN.

It is found in the virion. This is an uncharacterized protein from Acanthamoeba polyphaga (Amoeba).